A 410-amino-acid polypeptide reads, in one-letter code: uncharacterized protein (410 aa).

Helical transmembrane passes span 14–34, 48–68, 82–102, 140–160, 164–184, 212–232, 251–271, 279–299, 303–323, 342–362, and 371–391; these read IIIG…FLAI, GLVI…GGYI, IFGW…WVFF, YAAI…FGSS, TPFL…ALQF, YLFT…SQFS, LYGL…FPIV, PLCS…IFTV, VPSI…LFSM, GAIG…GICI, and IYIF…LAFA.

This sequence belongs to the major facilitator superfamily. TCR/Tet family.

It is found in the cell membrane. This is an uncharacterized protein from Bacillus subtilis (strain 168).